The following is a 261-amino-acid chain: Proliferating cell nuclear antigen (261 aa).

N6-acetyllysine is present on residues K14, K77, and K80. Residues 61 to 80 (RCDRNLAMGVNLTSMSKILK) mediate DNA binding. Cysteines 135 and 162 form a disulfide. A Glycyl lysine isopeptide (Lys-Gly) (interchain with G-Cter in SUMO2); alternate cross-link involves residue K164. Residue K164 forms a Glycyl lysine isopeptide (Lys-Gly) (interchain with G-Cter in ubiquitin); alternate linkage. A Phosphotyrosine; by EGFR modification is found at Y211. N6-acetyllysine is present on K248. A Glycyl lysine isopeptide (Lys-Gly) (interchain with G-Cter in SUMO2) cross-link involves residue K254.

It belongs to the PCNA family. As to quaternary structure, homotrimer. Interacts with p300/EP300; the interaction occurs on chromatin in UV-irradiated damaged cells. Interacts with CREBBP (via transactivation domain and C-terminus); the interaction occurs on chromatin in UV-irradiated damaged cells. Directly interacts with POLD1, POLD3 and POLD4 subunits of the DNA polymerase delta complex, POLD3 being the major interacting partner; the interaction with POLD3 is inhibited by CDKN1A/p21(CIP1). Forms a complex with activator 1 heteropentamer in the presence of ATP. Interacts with EXO1, POLH, POLK, DNMT1, ERCC5, FEN1, CDC6 and POLDIP2. Interacts with POLB. Interacts with APEX2; this interaction is triggered by reactive oxygen species and increased by misincorporation of uracil in nuclear DNA. Forms a ternary complex with DNTTIP2 and core histone. Interacts with KCTD10. Interacts with PPP1R15A. Interacts with SMARCA5/SNF2H. Interacts with BAZ1B/WSTF; the interaction is direct and is required for BAZ1B/WSTF binding to replication foci during S phase. Interacts with HLTF and SHPRH. Interacts with NUDT15. Interaction is disrupted in response to UV irradiation and acetylation. Interacts with CDKN1A/p21(CIP1) and CDT1; interacts via their PIP-box which also recruits the DCX(DTL) complex. The interaction with CDKN1A inhibits POLD3 binding. Interacts with DDX11. Interacts with EGFR; positively regulates PCNA. Interacts with PARPBP. Interacts (when ubiquitinated) with SPRTN; leading to enhance RAD18-mediated PCNA ubiquitination. Interacts (when polyubiquitinated) with ZRANB3. Interacts with SMARCAD1. Interacts with CDKN1C. Interacts with PCLAF (via PIP-box). Interacts with RTEL1 (via PIP-box); the interaction is direct and essential for the suppression of telomere fragility. Interacts with FAM111A (via PIP-box); the interaction is direct and required for PCNA loading on chromatin binding. Interacts with LIG1. Interacts with SETMAR. Interacts with ANKRD17. Interacts with FBXO18/FBH1 (via PIP-box); the interaction recruits the DCX(DTL) complex and promotes ubiquitination and degradation of FBXO18/FBH1. Interacts with POLN. Interacts with SDE2 (via PIP-box); the interaction is direct and prevents ultraviolet light induced monoubiquitination. Component of the replisome complex composed of at least DONSON, MCM2, MCM7, PCNA and TICRR; interaction at least with PCNA occurs during DNA replication. Interacts with MAPK15; the interaction is chromatin binding dependent and prevents MDM2-mediated PCNA destruction by inhibiting the association of PCNA with MDM2. Interacts with PARP10 (via PIP-box). Interacts with DDI2. Interacts with HMCES (via PIP-box). Interacts with TRAIP (via PIP-box). Interacts with UHRF2. Interacts with ALKBH2; this interaction is enhanced during the S-phase of the cell cycle. Interacts with ATAD5; the interaction promotes USP1-mediated PCNA deubiquitination. Interacts (when phosphorylated) with GRB2. Interacts with ANG. Interacts with nuclear UNG; this interaction mediates UNG recruitment to S-phase replication foci. Interacts with ERCC6L2 (via an atypical PIP-box); this interaction facilitates cenrtomeric localization of ERCC6L2. Post-translationally, phosphorylated. Phosphorylation at Tyr-211 by EGFR stabilizes chromatin-associated PCNA. Acetylated by CREBBP and p300/EP300; preferentially acetylated by CREBBP on Lys-80, Lys-13 and Lys-14 and on Lys-77 by p300/EP300 upon loading on chromatin in response to UV irradiation. Lysine acetylation disrupts association with chromatin, hence promoting PCNA ubiquitination and proteasomal degradation in response to UV damage in a CREBBP- and EP300-dependent manner. Acetylation disrupts interaction with NUDT15 and promotes degradation. In terms of processing, ubiquitinated. Following DNA damage, can be either monoubiquitinated to stimulate direct bypass of DNA lesions by specialized DNA polymerases or polyubiquitinated to promote recombination-dependent DNA synthesis across DNA lesions by template switching mechanisms. Following induction of replication stress, monoubiquitinated by the UBE2B-RAD18 complex on Lys-164, leading to recruit translesion (TLS) polymerases, which are able to synthesize across DNA lesions in a potentially error-prone manner. An error-free pathway also exists and requires non-canonical polyubiquitination on Lys-164 through 'Lys-63' linkage of ubiquitin moieties by the E2 complex UBE2N-UBE2V2 and the E3 ligases, HLTF, RNF8 and SHPRH. This error-free pathway, also known as template switching, employs recombination mechanisms to synthesize across the lesion, using as a template the undamaged, newly synthesized strand of the sister chromatid. Monoubiquitination at Lys-164 also takes place in undamaged proliferating cells, and is mediated by the DCX(DTL) complex, leading to enhance PCNA-dependent translesion DNA synthesis. Sumoylated during S phase. Post-translationally, methylated on glutamate residues by ARMT1.

It is found in the nucleus. In terms of biological role, auxiliary protein of DNA polymerase delta and epsilon, is involved in the control of eukaryotic DNA replication by increasing the polymerase's processibility during elongation of the leading strand. Induces a robust stimulatory effect on the 3'-5' exonuclease and 3'-phosphodiesterase, but not apurinic-apyrimidinic (AP) endonuclease, APEX2 activities. Has to be loaded onto DNA in order to be able to stimulate APEX2. Plays a key role in DNA damage response (DDR) by being conveniently positioned at the replication fork to coordinate DNA replication with DNA repair and DNA damage tolerance pathways. Acts as a loading platform to recruit DDR proteins that allow completion of DNA replication after DNA damage and promote postreplication repair: Monoubiquitinated PCNA leads to recruitment of translesion (TLS) polymerases, while 'Lys-63'-linked polyubiquitination of PCNA is involved in error-free pathway and employs recombination mechanisms to synthesize across the lesion. The chain is Proliferating cell nuclear antigen (Pcna) from Rattus norvegicus (Rat).